Reading from the N-terminus, the 198-residue chain is Superoxide dismutase [Fe] (198 aa).

H27, H74, D158, and H162 together coordinate Fe cation.

It belongs to the iron/manganese superoxide dismutase family. In terms of assembly, homodimer. Requires Fe cation as cofactor.

The protein localises to the cytoplasm. It carries out the reaction 2 superoxide + 2 H(+) = H2O2 + O2. In terms of biological role, destroys superoxide anion radicals which are normally produced within the cells and which are toxic to biological systems. The protein is Superoxide dismutase [Fe] (SODB) of Plasmodium malariae.